A 254-amino-acid polypeptide reads, in one-letter code: Polysaccharide deacetylase domain-containing protein ECU11_0510 (254 aa).

One can recognise a NodB homology domain in the interval 26–210 (GMIAINFVDG…IGKDKGYRFV (185 aa)).

This Encephalitozoon cuniculi (strain GB-M1) (Microsporidian parasite) protein is Polysaccharide deacetylase domain-containing protein ECU11_0510.